A 57-amino-acid polypeptide reads, in one-letter code: Small hydrophobic protein (57 aa).

Residues 1 to 8 (MPAIQPPL) are Virion surface-facing. A helical membrane pass occupies residues 9–29 (YPTFLLLILLSLIITLYAWII). Residues 30 to 57 (STITYKTAMRHAALYQRSFFRWSFDHSL) lie on the Intravirion side of the membrane.

It belongs to the rubulavirus small hydrophobic protein family. As to quaternary structure, interacts with host TNFRSF1A, RIPK1 and IRAK1; these interactions interfere with host NF-kappa-B activation at the level of receptor complexes. Interacts with host protein UBQLN4.

Its subcellular location is the virion membrane. The protein localises to the host cell membrane. Its function is as follows. Plays a role in the inhibition of the host NF-kappa-B pathway. This inhibition occurs at the receptor level, by preventing the signaling of TNFR1 as well as IL-1R and TLR3. The chain is Small hydrophobic protein (SH) from Homo sapiens (Human).